A 77-amino-acid chain; its full sequence is UPF0401 protein c0279 (77 aa).

The protein belongs to the UPF0401 family.

In Escherichia coli O6:H1 (strain CFT073 / ATCC 700928 / UPEC), this protein is UPF0401 protein c0279.